The sequence spans 326 residues: Putative UPF0725 protein At1g28500 (326 aa).

The segment covering 301–320 has biased composition (basic and acidic residues); that stretch reads KDTEQRSKTRQSEEKVESSQ. Residues 301 to 326 form a disordered region; the sequence is KDTEQRSKTRQSEEKVESSQKRSRLC.

It belongs to the UPF0725 (EMB2204) family.

The protein is Putative UPF0725 protein At1g28500 of Arabidopsis thaliana (Mouse-ear cress).